The chain runs to 318 residues: Biotin synthase (318 aa).

Residues 44 to 270 (LCGDAVNLCS…INPTANIRLA (227 aa)) form the Radical SAM core domain. Positions 62, 66, and 69 each coordinate [4Fe-4S] cluster. [2Fe-2S] cluster is bound by residues serine 106, cysteine 138, cysteine 198, and arginine 268.

It belongs to the radical SAM superfamily. Biotin synthase family. In terms of assembly, homodimer. [4Fe-4S] cluster is required as a cofactor. Requires [2Fe-2S] cluster as cofactor.

It carries out the reaction (4R,5S)-dethiobiotin + (sulfur carrier)-SH + 2 reduced [2Fe-2S]-[ferredoxin] + 2 S-adenosyl-L-methionine = (sulfur carrier)-H + biotin + 2 5'-deoxyadenosine + 2 L-methionine + 2 oxidized [2Fe-2S]-[ferredoxin]. It functions in the pathway cofactor biosynthesis; biotin biosynthesis; biotin from 7,8-diaminononanoate: step 2/2. Its function is as follows. Catalyzes the conversion of dethiobiotin (DTB) to biotin by the insertion of a sulfur atom into dethiobiotin via a radical-based mechanism. The protein is Biotin synthase of Alkaliphilus metalliredigens (strain QYMF).